We begin with the raw amino-acid sequence, 131 residues long: D-ribose pyranase (131 aa).

Catalysis depends on H20, which acts as the Proton donor. Residues D28, H98, and 120 to 122 (YAN) contribute to the substrate site.

The protein belongs to the RbsD / FucU family. RbsD subfamily. Homodecamer.

It is found in the cytoplasm. It carries out the reaction beta-D-ribopyranose = beta-D-ribofuranose. Its pathway is carbohydrate metabolism; D-ribose degradation; D-ribose 5-phosphate from beta-D-ribopyranose: step 1/2. Catalyzes the interconversion of beta-pyran and beta-furan forms of D-ribose. The chain is D-ribose pyranase from Bacillus cereus (strain ZK / E33L).